Reading from the N-terminus, the 285-residue chain is SLAM family member 9 (285 aa).

The signal sequence occupies residues 1 to 17; the sequence is MGALLWSLLLLLQEAKG. Residues 18–232 lie on the Extracellular side of the membrane; that stretch reads FSGDDEDPEE…YPEKPSMLCL (215 aa). The region spanning 25–126 is the Ig-like V-type domain; that stretch reads PEEVIGVLQE…SHITKSYHLR (102 aa). N-linked (GlcNAc...) asparagine glycosylation is found at asparagine 37, asparagine 97, asparagine 141, asparagine 149, asparagine 175, and asparagine 206. The Ig-like C2-type domain maps to 134–213; it reads PHITVNSNIS…VSNISSRRIS (80 aa). Cysteine 154 and cysteine 198 are joined by a disulfide. A helical membrane pass occupies residues 233-253; the sequence is LVKSLFLLLLLAILTVGLCLF. Residues 254–285 are Cytoplasmic-facing; the sequence is RAQKSYETPRVRKLKRNRIKLRKKGKSGPTPV.

It localises to the membrane. May play a role in the immune response. The sequence is that of SLAM family member 9 (Slamf9) from Mus musculus (Mouse).